The chain runs to 573 residues: Proline--tRNA ligase (573 aa).

It belongs to the class-II aminoacyl-tRNA synthetase family. ProS type 1 subfamily. As to quaternary structure, homodimer.

The protein resides in the cytoplasm. The catalysed reaction is tRNA(Pro) + L-proline + ATP = L-prolyl-tRNA(Pro) + AMP + diphosphate. Catalyzes the attachment of proline to tRNA(Pro) in a two-step reaction: proline is first activated by ATP to form Pro-AMP and then transferred to the acceptor end of tRNA(Pro). As ProRS can inadvertently accommodate and process non-cognate amino acids such as alanine and cysteine, to avoid such errors it has two additional distinct editing activities against alanine. One activity is designated as 'pretransfer' editing and involves the tRNA(Pro)-independent hydrolysis of activated Ala-AMP. The other activity is designated 'posttransfer' editing and involves deacylation of mischarged Ala-tRNA(Pro). The misacylated Cys-tRNA(Pro) is not edited by ProRS. The polypeptide is Proline--tRNA ligase (Geobacter sp. (strain M21)).